A 61-amino-acid chain; its full sequence is Small ribosomal subunit protein uS14 (61 aa).

Zn(2+) contacts are provided by cysteine 24, cysteine 27, cysteine 40, and cysteine 43.

It belongs to the universal ribosomal protein uS14 family. Zinc-binding uS14 subfamily. In terms of assembly, part of the 30S ribosomal subunit. Contacts proteins S3 and S10. The cofactor is Zn(2+).

Binds 16S rRNA, required for the assembly of 30S particles and may also be responsible for determining the conformation of the 16S rRNA at the A site. This is Small ribosomal subunit protein uS14 from Parafrankia sp. (strain EAN1pec).